Consider the following 407-residue polypeptide: Carbamoyl phosphate synthase small chain (407 aa).

The CPSase stretch occupies residues 1–205 (MTETTPKTAP…LQDGYGEQDA (205 aa)). Ser-60, Gly-257, and Gly-259 together coordinate L-glutamine. Positions 209-397 (HVVALDFGVK…INLIRERKGQ (189 aa)) constitute a Glutamine amidotransferase type-1 domain. Catalysis depends on Cys-286, which acts as the Nucleophile. Leu-287, Gln-290, Asn-328, Gly-330, and Phe-331 together coordinate L-glutamine. Catalysis depends on residues His-370 and Glu-372.

Belongs to the CarA family. In terms of assembly, composed of two chains; the small (or glutamine) chain promotes the hydrolysis of glutamine to ammonia, which is used by the large (or ammonia) chain to synthesize carbamoyl phosphate. Tetramer of heterodimers (alpha,beta)4.

It carries out the reaction hydrogencarbonate + L-glutamine + 2 ATP + H2O = carbamoyl phosphate + L-glutamate + 2 ADP + phosphate + 2 H(+). The enzyme catalyses L-glutamine + H2O = L-glutamate + NH4(+). Its pathway is amino-acid biosynthesis; L-arginine biosynthesis; carbamoyl phosphate from bicarbonate: step 1/1. It participates in pyrimidine metabolism; UMP biosynthesis via de novo pathway; (S)-dihydroorotate from bicarbonate: step 1/3. In terms of biological role, small subunit of the glutamine-dependent carbamoyl phosphate synthetase (CPSase). CPSase catalyzes the formation of carbamoyl phosphate from the ammonia moiety of glutamine, carbonate, and phosphate donated by ATP, constituting the first step of 2 biosynthetic pathways, one leading to arginine and/or urea and the other to pyrimidine nucleotides. The small subunit (glutamine amidotransferase) binds and cleaves glutamine to supply the large subunit with the substrate ammonia. The chain is Carbamoyl phosphate synthase small chain from Brucella canis (strain ATCC 23365 / NCTC 10854 / RM-666).